Here is a 79-residue protein sequence, read N- to C-terminus: Cytochrome b-c1 complex subunit 10 (79 aa).

Over 1–23 (MISFFPNKPMYHVQPHISFITPE) the chain is Mitochondrial matrix. A helical transmembrane segment spans residues 24-47 (RTMKTIPAFSRWAFAAVAGVFVFA). Residues 48 to 79 (MQVPKVKTTILQPIAFIGDHFKDKTPEEDKWL) are Mitochondrial intermembrane-facing.

Belongs to the UQCR11/QCR10 family. In terms of assembly, component of the ubiquinol-cytochrome c oxidoreductase (cytochrome b-c1 complex, complex III, CIII), a multisubunit enzyme composed of 3 respiratory subunits cytochrome b, cytochrome c1 and Rieske protein, 2 core protein subunits, and additional low-molecular weight protein subunits. The complex exists as an obligatory dimer and forms supercomplexes (SCs) in the inner mitochondrial membrane with cytochrome c oxidase (complex IV, CIV).

The protein localises to the mitochondrion inner membrane. In terms of biological role, component of the ubiquinol-cytochrome c oxidoreductase, a multisubunit transmembrane complex that is part of the mitochondrial electron transport chain which drives oxidative phosphorylation. The respiratory chain contains 3 multisubunit complexes succinate dehydrogenase (complex II, CII), ubiquinol-cytochrome c oxidoreductase (cytochrome b-c1 complex, complex III, CIII) and cytochrome c oxidase (complex IV, CIV), that cooperate to transfer electrons derived from NADH and succinate to molecular oxygen, creating an electrochemical gradient over the inner membrane that drives transmembrane transport and the ATP synthase. The cytochrome b-c1 complex catalyzes electron transfer from ubiquinol to cytochrome c, linking this redox reaction to translocation of protons across the mitochondrial inner membrane, with protons being carried across the membrane as hydrogens on the quinol. In the process called Q cycle, 2 protons are consumed from the matrix, 4 protons are released into the intermembrane space and 2 electrons are passed to cytochrome c. QCR10 has a role in CIII assembly and RIP1 stability. This Schizosaccharomyces pombe (strain 972 / ATCC 24843) (Fission yeast) protein is Cytochrome b-c1 complex subunit 10.